A 178-amino-acid polypeptide reads, in one-letter code: Large ribosomal subunit protein uL6 (178 aa).

It belongs to the universal ribosomal protein uL6 family. Part of the 50S ribosomal subunit.

Functionally, this protein binds to the 23S rRNA, and is important in its secondary structure. It is located near the subunit interface in the base of the L7/L12 stalk, and near the tRNA binding site of the peptidyltransferase center. The chain is Large ribosomal subunit protein uL6 from Campylobacter jejuni subsp. jejuni serotype O:2 (strain ATCC 700819 / NCTC 11168).